The sequence spans 737 residues: Glycogen [starch] synthase, muscle (737 aa).

Residue S8 is modified to Phosphoserine; by AMPK and PKA. S11 bears the Phosphoserine mark. K39 contacts UDP. Residues H205 and R211 each contribute to the UDP-alpha-D-glucose site. 5 residues coordinate alpha-D-glucose 6-phosphate: H291, E292, Q294, H297, and K301. R331 lines the UDP pocket. R331 contributes to the UDP-alpha-D-glucose binding site. S412 is modified (phosphoserine). Residue H501 participates in alpha-D-glucose 6-phosphate binding. UDP-alpha-D-glucose-binding residues include E510, W512, and G513. Residue T515 coordinates UDP. Residues R582 and R586 each contribute to the alpha-D-glucose 6-phosphate site. Positions 634-737 (YRYPRPASVP…PTSSLGEERN (104 aa)) are disordered. S641, S645, S649, and S652 each carry phosphoserine. S653 is modified (phosphoserine; by GSK3-alpha and GSK3-beta). A Phosphoserine; by CK2 modification is found at S657. The span at 658–681 (EDEEDPRNGPLEEDGERYDEDEEA) shows a compositional bias: acidic residues. The span at 682 to 695 (AKDRRNIRAPEWPR) shows a compositional bias: basic and acidic residues. Phosphoserine is present on S698. Residues 698-714 (SCTSSTSGSKRNSVDTA) are compositionally biased toward polar residues. A Phosphothreonine modification is found at T700. S710 bears the Phosphoserine mark. Over residues 715 to 737 (TSSSLSTPSEPLSPTSSLGEERN) the composition is skewed to low complexity. A Phosphothreonine modification is found at T721. Phosphoserine occurs at positions 727 and 731.

Belongs to the glycosyltransferase 3 family. In terms of assembly, part of the GYS1-GYG1 complex, a heterooctamer composed of a tetramer of GYS1 and 2 dimers of GYG1, where each GYS1 protomer binds to one GYG1 subunit (via GYG1 C-terminus); the GYS1 tetramer may dissociate from GYG1 dimers to continue glycogen polymerization on its own. Phosphorylation at Ser-8 by AMPK inactivates the enzyme activity. Primed phosphorylation at Ser-657 (site 5) by CSNK2A1 and CSNK2A2 is required for inhibitory phosphorylation at Ser-641 (site 3a), Ser-645 (site 3b), Ser-649 (site 3c) and Ser-653 (site 4) by GSK3A an GSK3B. Phosphorylated at Ser-641 by DYRK2, leading to inactivation. Phosphorylated at Ser-641 by PASK, leading to inactivation; phosphorylation by PASK is inhibited by glycogen. Dephosphorylation at Ser-641 and Ser-645 by PP1 activates the enzyme. Expressed in skeletal muscle and most other cell types where glycogen is present.

The catalysed reaction is [(1-&gt;4)-alpha-D-glucosyl](n) + UDP-alpha-D-glucose = [(1-&gt;4)-alpha-D-glucosyl](n+1) + UDP + H(+). Its pathway is glycan biosynthesis; glycogen biosynthesis. Allosteric activation by glucose-6-phosphate. Phosphorylation reduces enzyme activity by constraining a tense conformation of the tetramer through inter-subunit interaction. Phosphorylation reduces the activity towards UDP-glucose. When in the non-phosphorylated state, glycogen synthase does not require glucose-6-phosphate as an allosteric activator; when phosphorylated it does. Its function is as follows. Glycogen synthase participates in the glycogen biosynthetic process along with glycogenin and glycogen branching enzyme. Extends the primer composed of a few glucose units formed by glycogenin by adding new glucose units to it. In this context, glycogen synthase transfers the glycosyl residue from UDP-Glc to the non-reducing end of alpha-1,4-glucan. In Homo sapiens (Human), this protein is Glycogen [starch] synthase, muscle.